A 212-amino-acid chain; its full sequence is Large ribosomal subunit protein bL25 (212 aa).

The protein belongs to the bacterial ribosomal protein bL25 family. CTC subfamily. Part of the 50S ribosomal subunit; part of the 5S rRNA/L5/L18/L25 subcomplex. Contacts the 5S rRNA. Binds to the 5S rRNA independently of L5 and L18.

This is one of the proteins that binds to the 5S RNA in the ribosome where it forms part of the central protuberance. This Leptospira interrogans serogroup Icterohaemorrhagiae serovar copenhageni (strain Fiocruz L1-130) protein is Large ribosomal subunit protein bL25.